The chain runs to 482 residues: Capsule synthesis positive regulator AcpB (482 aa).

2 PRD domains span residues 165–270 and 283–395; these read PFEK…YKDI and EGNL…YTSN.

The protein belongs to the AtxA/AcpA family.

AcpB and AcpA regulate cap gene expression and capsule synthesis. This is Capsule synthesis positive regulator AcpB (acpB) from Bacillus anthracis.